Consider the following 350-residue polypeptide: DNA polymerase delta subunit 3 (350 aa).

Residues 131–350 (EEKSKPLVRP…LESFFKRKAK (220 aa)) form a disordered region. Basic and acidic residues-rich tracts occupy residues 146-162 (TTPE…KDMG) and 172-195 (MKKD…EENL). T223 is modified (phosphothreonine). S230 bears the Phosphoserine mark. A compositionally biased stretch (basic and acidic residues) spans 234–248 (SPKETDSNDKDKNND). Over residues 249–262 (DLEDLLETTAEDSL) the composition is skewed to acidic residues. The segment covering 274 to 286 (SETEHSKEPKSEE) has biased composition (basic and acidic residues). The span at 320-332 (LSSSKKQETPSSN) shows a compositional bias: polar residues.

As to quaternary structure, DNA polymerase delta is a heterotrimer of POL3, POL32 and HYS2. POL32 can form homodimers.

The protein resides in the nucleus. Its function is as follows. DNA polymerase delta (DNA polymerase III) participates in chromosomal DNA replication. It is required during synthesis of the leading and lagging DNA strands at the replication fork and binds at/or near replication origins and moves along DNA with the replication fork. It has 3'-5' proofreading exonuclease activity that correct errors arising during DNA replication. It is also involved in DNA synthesis during DNA repair. This is DNA polymerase delta subunit 3 (POL32) from Saccharomyces cerevisiae (strain ATCC 204508 / S288c) (Baker's yeast).